The chain runs to 210 residues: Cancer/testis antigen 2 (210 aa).

Gly residues-rich tracts occupy residues Met-1 to Gly-47 and Pro-56 to Gly-66. Disordered regions lie at residues Met-1–Ala-80 and Gly-154–Arg-197. The span at Gln-163–Glu-177 shows a compositional bias: basic and acidic residues.

Belongs to the CTAG/PCC1 family. Testis and very low level in placenta and in some uterus samples. Observed in 25-50% of tumor samples of melanomas, non-small-cell lung carcinomas, bladder, prostate and head and neck cancers.

This is Cancer/testis antigen 2 (CTAG2) from Homo sapiens (Human).